The primary structure comprises 336 residues: E3 ubiquitin-protein ligase RING2 (336 aa).

Serine 2 bears the N-acetylserine mark. Residues 2–179 (SQAVQTNGTQ…AEDNGDSSHC (178 aa)) form an interaction with HIP2 region. Serine 41 carries the phosphoserine modification. The segment at 51–91 (CPICLDMLKNTMTTKECLHRFCADCIITALRSGNKECPTCR) adopts an RING-type zinc-finger fold. Residues 93–98 (KLVSKR) form an interaction with nucleosomes via an acidic patch on histone H2A and histone H2B region. A Glycyl lysine isopeptide (Lys-Gly) (interchain with G-Cter in ubiquitin) cross-link involves residue lysine 112. Phosphoserine occurs at positions 143 and 168. A disordered region spans residues 157–213 (QRGKKQQIENGSGAEDNGDSSHCSNASTHSNQEAGPSNKRTKTSDDSGLEPDNNNAA). Positions 176-191 (SSHCSNASTHSNQEAG) are enriched in polar residues. Glycyl lysine isopeptide (Lys-Gly) (interchain with G-Cter in SUMO2) cross-links involve residues lysine 249 and lysine 323.

As to quaternary structure, component of chromatin-associated Polycomb (PcG) complexes. Component of a number of PRC1-like complexes; these complexes contain either the polycomb group ring finger protein PCGF1, or PCGF2, or PCGF3, or BMI1, or PCGF5, or PCGF6. Distinct PRC1-like complexes are composed of a RING1 subunit (RING1B or RING1A), one of the six PCGF proteins (PCGF1, PCGF2, PCGF3, BMI1, PCGF5 or PCGF6), one PHC protein (PHC1, PHC2 or PHC3) and one of the CBX proteins (CBX2, CBX4, CBX6, CBX7 or CBX8). Part of a complex that contains RNF2, UB2D3 and BMI1; within that complex RNF2 and BMI1 form a tight heterodimer, where UB2D3 interacts only with RNF2. The complex composed of RNF2, UB2D3 and BMI1 binds nucleosomes, and has activity only with nucleosomal histone H2A. Part of a complex that contains PCGF5, RNF2 and UBE2D3. Part of a complex that contains AUTS2, PCGF5, RNF2, CSNK2B and RYBP. Interacts with CBX6 and CBX8. Interacts with PHC1, PCGF2, RYBP, CBX7, CBX4, CBX2, RNF1/RING1, BMI1 and PHC2. Interaction with RYBP and CBX7 is mutually exclusive; both compete for the same binding site on RNF2. Component of repressive BCOR complex containing a Polycomb group subcomplex at least composed of RYBP, PCGF1, BCOR and RING1. Interacts with CBX2 and PHC1. Interacts with CHTOP. Interacts with AURKB. Part of the E2F6.com-1 complex in G0 phase composed of E2F6, MGA, MAX, TFDP1, CBX3, BAT8, EUHMTASE1, RNF1/RING1, RNF2/RING2, MBLR, L3MBTL2 and YAF2. Component of some MLL1/MLL complex, at least composed of the core components KMT2A/MLL1, ASH2L, HCFC1/HCF1, WDR5 and RBBP5, as well as the facultative components BACC1, CHD8, E2F6, HSP70, INO80C, KANSL1, LAS1L, MAX, MCRS1, MGA, MYST1/MOF, PELP1, PHF20, PRP31, RING2, RUVB1/TIP49A, RUVB2/TIP49B, SENP3, TAF1, TAF4, TAF6, TAF7, TAF9 and TEX10. Interacts with RYBP, HIP2 and TFCP2. Interacts with NUPR1. Interacts with SAMD7 in a PHC2-dependent manner. In terms of processing, monoubiquitinated, by auto-ubiquitination. Polyubiquitinated in the presence of UBE2D3 (in vitro).

The protein localises to the nucleus. The protein resides in the cytoplasm. Its subcellular location is the chromosome. The enzyme catalyses S-ubiquitinyl-[E2 ubiquitin-conjugating enzyme]-L-cysteine + [acceptor protein]-L-lysine = [E2 ubiquitin-conjugating enzyme]-L-cysteine + N(6)-ubiquitinyl-[acceptor protein]-L-lysine.. It participates in protein modification; protein ubiquitination. Its function is as follows. E3 ubiquitin-protein ligase that mediates monoubiquitination of 'Lys-119' of histone H2A (H2AK119Ub), thereby playing a central role in histone code and gene regulation. H2AK119Ub gives a specific tag for epigenetic transcriptional repression and participates in X chromosome inactivation of female mammals. May be involved in the initiation of both imprinted and random X inactivation. Essential component of a Polycomb group (PcG) multiprotein PRC1-like complex, a complex class required to maintain the transcriptionally repressive state of many genes, including Hox genes, throughout development. PcG PRC1 complex acts via chromatin remodeling and modification of histones, rendering chromatin heritably changed in its expressibility. E3 ubiquitin-protein ligase activity is enhanced by BMI1/PCGF4. Acts as the main E3 ubiquitin ligase on histone H2A of the PRC1 complex, while RING1 may rather act as a modulator of RNF2/RING2 activity. Plays a role in the transcriptional repression of genes that are required for pluripotency in embryonic stem cells, thereby contributing to differentiation of the ectodermal and endodermal germ layers. Association with the chromosomal DNA is cell-cycle dependent. In resting B- and T-lymphocytes, interaction with AURKB leads to block its activity, thereby maintaining transcription in resting lymphocytes. Also acts as a negative regulator of autophagy by mediating ubiquitination of AMBRA1, leading to its subsequent degradation. The polypeptide is E3 ubiquitin-protein ligase RING2 (RNF2) (Pongo abelii (Sumatran orangutan)).